We begin with the raw amino-acid sequence, 427 residues long: MPLQSSRLAVDNGTPVRGKPWPVWPQPTDGTLDALSRVLRSGRWAISGPYRGVESAERRFARRFADYHRIAHCVPASSGTASLMLALEACGVGAGDEVILPGVTWVASASTVVGVNAVPVFADIDPDTLCLDPDAVEAAITPATKAIVVVHLYAAVADLTRLKEVADRHGIVLIEDCAQAHGAEFEGHKVGTFGAVGTFSMQQSKVLTSGEGGAAITADPVLARRMEHLRADGRCYRDQAPPSGHMELVETGELMGSNRCISEFQAAVLTEQLGELDRFNALRRHNAELLDALLTDVGYRPQRSTPGTTARTYYTYVAELPDAELPGADITKVTEALTAELGFPVAPAYSPLNANPLYDPASRSRFALGPQHEKLIDPARFVLPVSGRLTRRLVTFHHAALLGDESDMRDIAEAFTKVLQHRAVLAA.

A disordered region spans residues 1–20 (MPLQSSRLAVDNGTPVRGKP). The residue at position 205 (K205) is an N6-(pyridoxal phosphate)lysine.

This sequence belongs to the DegT/DnrJ/EryC1 family. L-glutamine:2-deoxy-scyllo-inosose/scyllo-inosose aminotransferase subfamily. The cofactor is pyridoxal 5'-phosphate.

It catalyses the reaction 2-deoxy-L-scyllo-inosose + L-glutamine = 2-deoxy-scyllo-inosamine + 2-oxoglutaramate. The enzyme catalyses 3-amino-2,3-dideoxy-scyllo-inosose + L-glutamine = 2-deoxystreptamine + 2-oxoglutaramate. It functions in the pathway metabolic intermediate biosynthesis; 2-deoxystreptamine biosynthesis; 2-deoxystreptamine from D-glucose 6-phosphate: step 2/4. Its pathway is antibiotic biosynthesis; kanamycin biosynthesis. Its function is as follows. Catalyzes the PLP-dependent transamination of 2-deoxy-scyllo-inosose (2-DOI) to form 2-deoxy-scyllo-inosamine (2-DOIA) using L-glutamine as the amino donor. Also catalyzes the transamination of 3-amino-2,3-dideoxy-scyllo-inosose (keto-2-DOIA) into 2-deoxystreptamine (2-DOS). This is L-glutamine:2-deoxy-scyllo-inosose aminotransferase (kanB) from Streptomyces kanamyceticus.